Consider the following 310-residue polypeptide: MAPSFVSIDTTPDFDMTPTSSKSADSGKRTLLLAPPSIATQEDKLRTLFTTYDRSTTDLQMLDRVSAGFVSLPANTYDLVLVLTGTDGTRRSEALQLLKREVYAAVVPAMKGGAKLQTEDNFFGEAEDREAVLAGLVKKETGFEKMDVGNGAAVPLRLGRKKKAAPAPAPVVQPPPIISSDDNDLNDDELIDEDTLLSADDLKRPIVPPPECQPKAGKRRRACKDCTCGLAAQIEAEDRERREAADKSLNVMKLESDDLNELDFTVQGKTGSCGNCALGDAFRCDGCPFIGLPAFKPGQEVQILNDVAQL.

Disordered stretches follow at residues Met1–Thr30 and Ala165–Asp184. The tract at residues Ala24 to Val154 is N-terminal SAM-like domain. The interval Pro155–Leu202 is linker. Pro residues predominate over residues Ala167–Ile177. Positions 212, 223, 226, and 228 each coordinate [2Fe-2S] cluster. The tract at residues Cys212–Cys228 is fe-S binding site A. [4Fe-4S] cluster contacts are provided by Cys273, Cys276, Cys284, and Cys287. 2 short sequence motifs (cx2C motif) span residues Cys273 to Cys276 and Cys284 to Cys287. Residues Cys273–Cys287 are fe-S binding site B.

Belongs to the anamorsin family. As to quaternary structure, monomer. Interacts with tah18. Interacts with mia40. It depends on [2Fe-2S] cluster as a cofactor. Requires [4Fe-4S] cluster as cofactor.

The protein localises to the cytoplasm. It localises to the mitochondrion intermembrane space. Component of the cytosolic iron-sulfur (Fe-S) protein assembly (CIA) machinery required for the maturation of extramitochondrial Fe-S proteins. Part of an electron transfer chain functioning in an early step of cytosolic Fe-S biogenesis, facilitating the de novo assembly of a [4Fe-4S] cluster on the scaffold complex cfd1-nbp35. Electrons are transferred to dre2 from NADPH via the FAD- and FMN-containing protein tah18. Tah18-dre2 are also required for the assembly of the diferric tyrosyl radical cofactor of ribonucleotide reductase (RNR), probably by providing electrons for reduction during radical cofactor maturation in the catalytic small subunit rnr2. The polypeptide is Fe-S cluster assembly protein dre2 (Emericella nidulans (strain FGSC A4 / ATCC 38163 / CBS 112.46 / NRRL 194 / M139) (Aspergillus nidulans)).